The following is a 1030-amino-acid chain: uncharacterized protein (1030 aa).

The span at 1 to 15 shows a compositional bias: polar residues; sequence MSENSTDSKNFQFSE. Residues 1–53 form a disordered region; the sequence is MSENSTDSKNFQFSEGSRESSNDELKVLLRDTETKEDEKSSFSNSEEESIIEN. The span at 16–40 shows a compositional bias: basic and acidic residues; it reads GSRESSNDELKVLLRDTETKEDEKS. Serine 41 is subject to Phosphoserine. A Helicase ATP-binding domain is found at 134–290; sequence IKCVERMESV…WISEIHKQPC (157 aa). 147 to 154 contributes to the ATP binding site; the sequence is AHTSAGKT. The DEVH box signature appears at 238-241; the sequence is DEVH. The Helicase C-terminal domain maps to 357–561; sequence SLERIINMVL…GMILNLMRIE (205 aa).

This sequence belongs to the helicase family. SKI2 subfamily.

It localises to the nucleus. This is an uncharacterized protein from Schizosaccharomyces pombe (strain 972 / ATCC 24843) (Fission yeast).